The following is a 717-amino-acid chain: Pre-mRNA-splicing factor ATP-dependent RNA helicase DEAH10 (717 aa).

The tract at residues 1 to 29 is disordered; sequence MPSMAQGELKSFVQNSRPNPKSPTVSPFS. Over residues 12 to 29 the composition is skewed to polar residues; the sequence is FVQNSRPNPKSPTVSPFS. The region spanning 51 to 256 is the Helicase ATP-binding domain; the sequence is VEEVQKNDIL…FGGAKAVHVQ (206 aa). 64-71 contributes to the ATP binding site; that stretch reads GETGSGKT. Positions 162–165 match the DEAH box motif; sequence DEAH. The region spanning 278–453 is the Helicase C-terminal domain; sequence TLVTIFQIHF…NIILQLKALG (176 aa).

The protein belongs to the DEAD box helicase family. DEAH subfamily. PRP22 sub-subfamily. Widely expressed but spatially and temporally regulated during development.

Its subcellular location is the nucleus. It localises to the nucleolus. The catalysed reaction is ATP + H2O = ADP + phosphate + H(+). Functionally, involved in pre-mRNA splicing. Plays a role during development in processes such as meristem maintenance, leaf morphogenesis and root morphogenesis. This is Pre-mRNA-splicing factor ATP-dependent RNA helicase DEAH10 from Arabidopsis thaliana (Mouse-ear cress).